The primary structure comprises 105 residues: Cuticle protein AMP4 (105 aa).

The segment at 1–21 (DRDAQTLTDERNDQGDGNFRY) is disordered. The region spanning 16 to 81 (DGNFRYEFET…PSSDLLPVGP (66 aa)) is the Chitin-binding type R&amp;R domain.

As to expression, arthrodial membrane.

In Homarus americanus (American lobster), this protein is Cuticle protein AMP4.